We begin with the raw amino-acid sequence, 167 residues long: Respiratory supercomplex factor 1-A, mitochondrial (167 aa).

The HIG1 domain occupies 1 to 86 (MCSDFEEETS…TERKQRREFE (86 aa)). The next 2 membrane-spanning stretches (helical) occupy residues 21–38 (EPLI…LYRA) and 53–75 (MFRA…GMYY). A coiled-coil region spans residues 75-107 (YKTERKQRREFEKKVEERKAQEKRDAWLRELEA).

The protein belongs to the RCF1 family. In terms of assembly, associates with the respiratory chain complex III/complex IV supercomplex.

It localises to the mitochondrion membrane. Cytochrome c oxidase subunit which plays a role in assembly of respiratory supercomplexes. This chain is Respiratory supercomplex factor 1-A, mitochondrial (rcf1-A), found in Talaromyces marneffei (strain ATCC 18224 / CBS 334.59 / QM 7333) (Penicillium marneffei).